A 290-amino-acid polypeptide reads, in one-letter code: Glutaredoxin domain-containing cysteine-rich protein 1 (290 aa).

Residues Leu127 to Gln234 enclose the Glutaredoxin domain.

This sequence belongs to the GRXCR1 family. In terms of tissue distribution, expressed at low levels in adult lung, brain and duodenum with moderate levels in testis. Highly expressed in fetal cochlea.

It localises to the cell projection. Its subcellular location is the stereocilium. The protein localises to the microvillus. It is found in the kinocilium. Its function is as follows. May play a role in actin filament architecture in developing stereocilia of sensory cells. The chain is Glutaredoxin domain-containing cysteine-rich protein 1 (GRXCR1) from Homo sapiens (Human).